The primary structure comprises 493 residues: N-acetylglucosamine kinase 1 (493 aa).

The region spanning 27 to 490 (ESSVLSSIVE…SIIGAAIGAA (464 aa)) is the Hexokinase domain. The segment at 79-221 (TGDEHGQYLV…GLTLDVQSIL (143 aa)) is hexokinase small subdomain. Residues 222–479 (NDSLAVYSAG…IKVDLKLIEN (258 aa)) form a hexokinase large subdomain region.

This sequence belongs to the hexokinase family. As to quaternary structure, interacts with histone deacetylase SIR2 under filamentation-inducing conditions.

The protein resides in the cytoplasm. It localises to the nucleus. Its subcellular location is the mitochondrion. The enzyme catalyses N-acetyl-D-glucosamine + ATP = N-acetyl-D-glucosamine 6-phosphate + ADP + H(+). It catalyses the reaction D-mannose + ATP = D-mannose 6-phosphate + ADP + H(+). It carries out the reaction D-glucose + ATP = D-glucose 6-phosphate + ADP + H(+). The catalysed reaction is D-glucosamine + ATP = D-glucosamine 6-phosphate + ADP + H(+). It participates in carbohydrate metabolism; hexose metabolism. It functions in the pathway carbohydrate degradation; glycolysis; D-glyceraldehyde 3-phosphate and glycerone phosphate from D-glucose: step 1/4. Its function is as follows. Component of the N-acetylglucosamine catabolic cascade that phosphorylates N-acetylglucosamine (GlcNAc), and allows the unique ability to utilise GlcNAc as carbon source. Converts GlcNAc to GlcNAc-6-P. Also able to phosphorylate glucose, glucosamine (GlcN), and mannose. Galactose, fructose, N-acetylmannosamine (ManNAc), mannosamine (ManN), galactosamine (GalN), and N-acetylgalactosamine (GalNAc) are not phosphorylated by HXK1. GlcNAc metabolism is closely associated with virulence and morphogenesis, and is involved in the cell wall synthesis. Acts both as a repressor and an activator of genes involved in maintaining cellular homeostasis. Contributes to white-opaque morphological transition and plays a role as a filamentation repressor. This Candida albicans (strain SC5314 / ATCC MYA-2876) (Yeast) protein is N-acetylglucosamine kinase 1.